Here is a 514-residue protein sequence, read N- to C-terminus: Myocyte-specific enhancer factor 2D (514 aa).

Positions 3–57 (RKKIQIQRITDERNRQVTFTKRKFGLMKKAYELSVLCDCEIALIIFNHSNKLFQY) constitute an MADS-box domain. The mef2-type DNA-binding region spans 58-86 (ASTDMDKVLLKYTEYNEPHESRTNADIIE). 3 positions are modified to phosphoserine: D97, S98, and S106. Position 107 is a phosphothreonine (L107). S110 bears the Phosphoserine mark. S121 carries the phosphoserine; by PKA modification. The disordered stretch occupies residues 174-207 (TDPRLLSPQQPALQRNSVSPGLPQRPASAGAMLG). S180 carries the post-translational modification Phosphoserine; by MAPK7. Positions 180-192 (SPQQPALQRNSVS) are enriched in polar residues. S190 is subject to Phosphoserine; by PKA. The residue at position 231 (S231) is a Phosphoserine. The tract at residues 244-269 (NKVIPAKSPPPPTHNTQLGAPSRKPD) is disordered. Residue K245 is modified to N6-acetyllysine. S251 is modified (phosphoserine). Positions 286-292 (TEDHLDL) are beta domain. Disordered regions lie at residues 364-399 (WQQPQPPQQPQPPQPPQSQPQPPQPQPQQPPQQQPH) and 430-514 (SIKS…WTLK). Residues 367-396 (PQPPQQPQPPQPPQSQPQPPQPQPQQPPQQ) are compositionally biased toward pro residues. K432 bears the N6-acetyllysine; alternate mark. K432 participates in a covalent cross-link: Glycyl lysine isopeptide (Lys-Gly) (interchain with G-Cter in SUMO); alternate. S437 carries the post-translational modification Phosphoserine.

The protein belongs to the MEF2 family. Forms a complex with class II HDACs in undifferentiating cells. On myogenic differentiation, HDACs are released into the cytoplasm allowing MEF2s to interact with other proteins for activation. Interacts with HDAC4 (in undifferentiating cells); the interaction translocates MEF2D to nuclear dots. Forms a heterodimer with MEF2A. Interacts with MAPK7; the interaction phosphorylates but does not activate MEF2D. Interacts with MYOG. Interacts with CCAR2 and HDAC3. Post-translationally, phosphorylated on Ser-437 is which is required for Lys-432 sumoylation and inhibits transcriptional activity. Phosphorylation on this residue by CDK5 is dependent on p35 and calpains. Phosphorylated by PKA at Ser-121 and Ser-190 represses transcriptional activity in embryonic and postnatal skeletal muscle, and stabilizes protein levels. No in vitro phosphorylation by PKA on Thr-20. Phosphorylated and activated by CaMK4. Acetylated on Lys-432 by CREBBP. Acetylated by EP300. Deacetylated by SIRT1 and HDAC3. In terms of processing, sumoylated on Lys-432 with SUMO2 but not SUMO1; which inhibits transcriptional activity and myogenic activity. Desumoylated by SENP3. Post-translationally, proteolytically cleaved in cerebellar granule neurons by caspase 7 following neurotoxicity. Preferentially cleaves the CDK5-mediated hyperphosphorylated form which leads to neuron apoptosis and transcriptional inactivation. In terms of tissue distribution, widely expressed though mainly restricted to skeletal and cardiac muscle, brain, neurons and lymphocytes. Differentially expressed depending on if isoforms contain the beta domain or not, with the total expression of the beta domain-lacking isoforms vastly exceeding that of the beta domain-containing isoforms. Isoforms containing the beta domain are expressed primarily in skeletal and cardiac muscle and in brain. Also present in lung and testis. Splicing to include the beta domain is induced in differentiating myocytes. Isoforms lacking the beta domain are expressed less abundantly in skeletal muscle, brain and lymphocytes, and are uniquely found in ovary, liver, spleen and kidney. In embryos, the beta domain-containing and beta domain-lacking isoforms are equally expressed. Also expressed cerebellar granule neurons and other regions of the CNS. Highest levels in the olfactory bulb, cortex, hippocampus, thalamus and cerebellum.

The protein resides in the nucleus. Its function is as follows. Transcriptional activator which binds specifically to the MEF2 element, 5'-YTA[AT](4)TAR-3', found in numerous muscle-specific, growth factor- and stress-induced genes. Mediates cellular functions not only in skeletal and cardiac muscle development, but also in neuronal differentiation and survival. Plays diverse roles in the control of cell growth, survival and apoptosis via p38 MAPK signaling in muscle-specific and/or growth factor-related transcription. Plays a critical role in the regulation of neuronal apoptosis. This is Myocyte-specific enhancer factor 2D (Mef2d) from Mus musculus (Mouse).